Consider the following 501-residue polypeptide: Lysine--tRNA ligase (501 aa).

Glutamate 402 and glutamate 409 together coordinate Mg(2+).

This sequence belongs to the class-II aminoacyl-tRNA synthetase family. Homodimer. Mg(2+) serves as cofactor.

The protein resides in the cytoplasm. The catalysed reaction is tRNA(Lys) + L-lysine + ATP = L-lysyl-tRNA(Lys) + AMP + diphosphate. The chain is Lysine--tRNA ligase from Helicobacter pylori (strain HPAG1).